We begin with the raw amino-acid sequence, 208 residues long: Small ribosomal subunit protein uS3 (208 aa).

The KH type-2 domain occupies 38–106 (IRDYIKARLY…EILIDIQEVR (69 aa)).

The protein belongs to the universal ribosomal protein uS3 family. Part of the 30S ribosomal subunit. Forms a tight complex with proteins S10 and S14.

Its function is as follows. Binds the lower part of the 30S subunit head. Binds mRNA in the 70S ribosome, positioning it for translation. The chain is Small ribosomal subunit protein uS3 from Syntrophobacter fumaroxidans (strain DSM 10017 / MPOB).